Here is a 437-residue protein sequence, read N- to C-terminus: F-box/FBD/LRR-repeat protein At5g22700 (437 aa).

Residues 5-51 (GDRISSLPDELLCQILSNLPTKNAVTTSILSTRWRSIWLSTPVLDID) form the F-box domain. LRR repeat units follow at residues 86–113 (RDDVDMCTIMPWIQDAVNRRIQHLEVDC), 134–160 (SLRLHFVTLHRYEFVSLPNLKVMHLEE), 161–186 (NIYYCLETLENFISSCPVLEDLTVVR), 187–210 (IVDIITEKILRVRSRSLNSLKLVL), 215–240 (GWFIDDIDEWKVIIDAPRLAYLSLKD), 272–297 (PVTFERSNVGKLLTGLSSIRDLTISG), and 322–350 (NARFYDCDLEMLPCVLESCPNLKSLVLGL). The 46-residue stretch at 361–406 (RVSSVPPCFLSSLEFVEIRSRLCRKRYVMKVARYFAKNSVMLKKFV) folds into the FBD domain.

The chain is F-box/FBD/LRR-repeat protein At5g22700 from Arabidopsis thaliana (Mouse-ear cress).